A 111-amino-acid chain; its full sequence is MAKGGFPGGFNINNMIKQAQQMQEEIKKMQEELMQKTVEGTSGGGMVKAVANGRKELVSININPEVVDKDDVETLEDLVLAAVNQALRNAEEMIASEMAKITGGFNIPGLF.

The protein belongs to the YbaB/EbfC family. In terms of assembly, homodimer.

It is found in the cytoplasm. The protein resides in the nucleoid. In terms of biological role, binds to DNA and alters its conformation. May be involved in regulation of gene expression, nucleoid organization and DNA protection. The polypeptide is Nucleoid-associated protein TTE0040 (Caldanaerobacter subterraneus subsp. tengcongensis (strain DSM 15242 / JCM 11007 / NBRC 100824 / MB4) (Thermoanaerobacter tengcongensis)).